Here is a 405-residue protein sequence, read N- to C-terminus: Phosphopentomutase (405 aa).

Residues Asp10, Asp297, His302, Asp338, His339, and His350 each contribute to the Mn(2+) site.

The protein belongs to the phosphopentomutase family. Mn(2+) is required as a cofactor.

It localises to the cytoplasm. The catalysed reaction is 2-deoxy-alpha-D-ribose 1-phosphate = 2-deoxy-D-ribose 5-phosphate. It carries out the reaction alpha-D-ribose 1-phosphate = D-ribose 5-phosphate. Its pathway is carbohydrate degradation; 2-deoxy-D-ribose 1-phosphate degradation; D-glyceraldehyde 3-phosphate and acetaldehyde from 2-deoxy-alpha-D-ribose 1-phosphate: step 1/2. Its function is as follows. Isomerase that catalyzes the conversion of deoxy-ribose 1-phosphate (dRib-1-P) and ribose 1-phosphate (Rib-1-P) to deoxy-ribose 5-phosphate (dRib-5-P) and ribose 5-phosphate (Rib-5-P), respectively. The protein is Phosphopentomutase of Pseudoalteromonas translucida (strain TAC 125).